We begin with the raw amino-acid sequence, 165 residues long: LOB domain-containing protein 21 (165 aa).

Residues 10-111 enclose the LOB domain; it reads SSCAACKLLK…HDLAVARTRL (102 aa).

This sequence belongs to the LOB domain-containing protein family.

The sequence is that of LOB domain-containing protein 21 (LBD21) from Arabidopsis thaliana (Mouse-ear cress).